Consider the following 534-residue polypeptide: Inosine-5'-monophosphate dehydrogenase (534 aa).

2 CBS domains span residues 117 to 181 and 190 to 255; these read YVMQ…GTPI and TTPI…PMAS. NAD(+) contacts are provided by residues 292–294 and 342–344; these read DSS and GMG. K(+)-binding residues include G344 and G346. S347 contacts IMP. C349 contributes to the K(+) binding site. Residue C349 is the Thioimidate intermediate of the active site. IMP contacts are provided by residues 382–384, 405–406, and 430–434; these read DGG, GG, and YRGMG. Catalysis depends on R448, which acts as the Proton acceptor. IMP is bound at residue Q461. K(+) is bound by residues E520, G521, and G522.

It belongs to the IMPDH/GMPR family. As to quaternary structure, homotetramer. K(+) serves as cofactor.

It is found in the cytoplasm. It catalyses the reaction IMP + NAD(+) + H2O = XMP + NADH + H(+). The protein operates within purine metabolism; XMP biosynthesis via de novo pathway; XMP from IMP: step 1/1. Mycophenolic acid (MPA) is a non-competitive inhibitor that prevents formation of the closed enzyme conformation by binding to the same site as the amobile flap. In contrast, mizoribine monophosphate (MZP) is a competitive inhibitor that induces the closed conformation. MPA is a potent inhibitor of mammalian IMPDHs but a poor inhibitor of the bacterial enzymes. MZP is a more potent inhibitor of bacterial IMPDH. Functionally, catalyzes the conversion of inosine 5'-phosphate (IMP) to xanthosine 5'-phosphate (XMP), the first committed and rate-limiting step in the de novo synthesis of guanine nucleotides, and therefore plays an important role in the regulation of cell growth. The polypeptide is Inosine-5'-monophosphate dehydrogenase (Caenorhabditis elegans).